The chain runs to 65 residues: uncharacterized protein (65 aa).

2 helical membrane-spanning segments follow: residues 4 to 24 (AWLF…DKVL) and 39 to 59 (LPIP…FIVF).

The protein localises to the membrane. This is an uncharacterized protein from Streptococcus pneumoniae serotype 2 (strain D39 / NCTC 7466).